We begin with the raw amino-acid sequence, 431 residues long: Enolase (431 aa).

(2R)-2-phosphoglycerate is bound at residue Gln-163. The active-site Proton donor is the Glu-205. Mg(2+) contacts are provided by Asp-242, Glu-288, and Asp-315. (2R)-2-phosphoglycerate is bound by residues Lys-340, Arg-369, Ser-370, and Lys-391. Residue Lys-340 is the Proton acceptor of the active site.

The protein belongs to the enolase family. Mg(2+) is required as a cofactor.

Its subcellular location is the cytoplasm. It localises to the secreted. It is found in the cell surface. It carries out the reaction (2R)-2-phosphoglycerate = phosphoenolpyruvate + H2O. The protein operates within carbohydrate degradation; glycolysis; pyruvate from D-glyceraldehyde 3-phosphate: step 4/5. Functionally, catalyzes the reversible conversion of 2-phosphoglycerate (2-PG) into phosphoenolpyruvate (PEP). It is essential for the degradation of carbohydrates via glycolysis. This Bacillus cereus (strain AH187) protein is Enolase.